Reading from the N-terminus, the 505-residue chain is ATP synthase subunit alpha (505 aa).

169 to 176 provides a ligand contact to ATP; that stretch reads GDRQTGKT.

Belongs to the ATPase alpha/beta chains family. As to quaternary structure, F-type ATPases have 2 components, CF(1) - the catalytic core - and CF(0) - the membrane proton channel. CF(1) has five subunits: alpha(3), beta(3), gamma(1), delta(1), epsilon(1). CF(0) has three main subunits: a(1), b(2) and c(9-12). The alpha and beta chains form an alternating ring which encloses part of the gamma chain. CF(1) is attached to CF(0) by a central stalk formed by the gamma and epsilon chains, while a peripheral stalk is formed by the delta and b chains.

It is found in the cell membrane. The catalysed reaction is ATP + H2O + 4 H(+)(in) = ADP + phosphate + 5 H(+)(out). Its function is as follows. Produces ATP from ADP in the presence of a proton gradient across the membrane. The alpha chain is a regulatory subunit. In Clostridium acetobutylicum (strain ATCC 824 / DSM 792 / JCM 1419 / IAM 19013 / LMG 5710 / NBRC 13948 / NRRL B-527 / VKM B-1787 / 2291 / W), this protein is ATP synthase subunit alpha.